Reading from the N-terminus, the 278-residue chain is Tryptophan 2,3-dioxygenase (278 aa).

Substrate-binding positions include 47 to 51 (FIVQH), tyrosine 109, and arginine 113. Histidine 236 serves as a coordination point for heme. Residue threonine 250 participates in substrate binding.

It belongs to the tryptophan 2,3-dioxygenase family. As to quaternary structure, homotetramer. It depends on heme as a cofactor.

The enzyme catalyses L-tryptophan + O2 = N-formyl-L-kynurenine. The protein operates within amino-acid degradation; L-tryptophan degradation via kynurenine pathway; L-kynurenine from L-tryptophan: step 1/2. Its function is as follows. Heme-dependent dioxygenase that catalyzes the oxidative cleavage of the L-tryptophan (L-Trp) pyrrole ring and converts L-tryptophan to N-formyl-L-kynurenine. Catalyzes the oxidative cleavage of the indole moiety. The chain is Tryptophan 2,3-dioxygenase from Ralstonia pickettii (strain 12J).